The following is a 21-amino-acid chain: Putative sperm adenylate cyclase (21 aa).

It carries out the reaction ATP = 3',5'-cyclic AMP + diphosphate. The polypeptide is Putative sperm adenylate cyclase (Mus musculus (Mouse)).